The following is a 277-amino-acid chain: Bifunctional protein FolD (277 aa).

NADP(+) contacts are provided by residues 159–161 (GRS), S184, and I225.

The protein belongs to the tetrahydrofolate dehydrogenase/cyclohydrolase family. Homodimer.

It catalyses the reaction (6R)-5,10-methylene-5,6,7,8-tetrahydrofolate + NADP(+) = (6R)-5,10-methenyltetrahydrofolate + NADPH. The catalysed reaction is (6R)-5,10-methenyltetrahydrofolate + H2O = (6R)-10-formyltetrahydrofolate + H(+). The protein operates within one-carbon metabolism; tetrahydrofolate interconversion. Functionally, catalyzes the oxidation of 5,10-methylenetetrahydrofolate to 5,10-methenyltetrahydrofolate and then the hydrolysis of 5,10-methenyltetrahydrofolate to 10-formyltetrahydrofolate. The polypeptide is Bifunctional protein FolD (Acholeplasma laidlawii (strain PG-8A)).